The primary structure comprises 1458 residues: ABC multidrug transporter B (1458 aa).

The next 5 helical transmembrane spans lie at 30–50 (FSLLFEELILGILPLGIVLII), 70–90 (LLWAKITAWLALGIVQLVLAV), 102–122 (ASIAANAIITVGFFILCLLSC), 128–148 (STTPSFLLNIYLLFTLLFDIA), and 165–185 (IAILTSVTVGIKFLLLILEAV). An N-linked (GlcNAc...) asparagine glycan is attached at Asn-208. A helical transmembrane segment spans residues 273-295 (WPLLSAVPPRACLAALNFCQPLL). In terms of domain architecture, ABC transmembrane type-1 1 spans 283–561 (ACLAALNFCQ…LVMALMTFVG (279 aa)). N-linked (GlcNAc...) asparagine glycosylation is present at Asn-309. Helical transmembrane passes span 314–334 (IGYGLIGAYILVYIGMGVTMG), 387–407 (WQTIHDIWGNAAEIALAIYLL), 411–431 (LGVACVVPVGVALVALIGCLI), 501–521 (LGWTTRIFAPIFALGAFYGIM), and 541–561 (LFALLADPLLSLVMALMTFVG). Residues 626–853 (LTVKNATFAW…AGGYVSSFGL (228 aa)) form the ABC transporter 1 domain. The N-linked (GlcNAc...) asparagine glycan is linked to Asn-630. 660–667 (GPSGCGKS) lines the ATP pocket. Residues Asn-702, Asn-804, and Asn-879 are each glycosylated (N-linked (GlcNAc...) asparagine). Positions 933–1182 (PNGRTGYYLG…LVTFWTNLET (250 aa)) constitute an ABC transmembrane type-1 2 domain. 6 helical membrane-spanning segments follow: residues 940 to 960 (YLGIYAMLGAVGMLSLIIGCW), 978 to 998 (LLATVLNAPMSFFAATDSGSI), 1016 to 1036 (AAINTFATLILCLAQMILMGI), 1040 to 1060 (YAAISFPLVILAVYSIQKVYL), 1125 to 1145 (LTLTLDMVVAAIAVILIVLVV), and 1156 to 1176 (VGVALLNVILFSQSIKLLVTF). The ABC transporter 2 domain occupies 1219 to 1449 (IEFKSVSAEY…EGSYFSRLYA (231 aa)). ATP is bound at residue 1252-1259 (GRTGSGKT). A glycan (N-linked (GlcNAc...) asparagine) is linked at Asn-1316.

The protein belongs to the ABC transporter superfamily. ABCC family. Conjugate transporter (TC 3.A.1.208) subfamily.

The protein localises to the cell membrane. In terms of biological role, pleiotropic ABC efflux transporter that may be involved in A.fumigatus adaptation to azoles such as vorizonazole. In Aspergillus fumigatus (strain ATCC MYA-4609 / CBS 101355 / FGSC A1100 / Af293) (Neosartorya fumigata), this protein is ABC multidrug transporter B.